An 879-amino-acid polypeptide reads, in one-letter code: Protein translocase subunit SecA (879 aa).

ATP-binding positions include Q87, 105–109, and D509; that span reads GEGKT. The tract at residues 834 to 879 is disordered; sequence IAEDSEKLKPITGTKKPKRNDPCPCGSGKKYKNCCGQSGPKKGLLA. Residues C856, C858, C867, and C868 each contribute to the Zn(2+) site.

It belongs to the SecA family. Monomer and homodimer. Part of the essential Sec protein translocation apparatus which comprises SecA, SecYEG and auxiliary proteins SecDF-YajC and YidC. It depends on Zn(2+) as a cofactor.

It localises to the cell inner membrane. Its subcellular location is the cytoplasm. The enzyme catalyses ATP + H2O + cellular proteinSide 1 = ADP + phosphate + cellular proteinSide 2.. Functionally, part of the Sec protein translocase complex. Interacts with the SecYEG preprotein conducting channel. Has a central role in coupling the hydrolysis of ATP to the transfer of proteins into and across the cell membrane, serving as an ATP-driven molecular motor driving the stepwise translocation of polypeptide chains across the membrane. The protein is Protein translocase subunit SecA of Sulfurovum sp. (strain NBC37-1).